The sequence spans 274 residues: 2-dehydro-3-deoxyphosphooctonate aldolase (274 aa).

It belongs to the KdsA family.

It localises to the cytoplasm. The enzyme catalyses D-arabinose 5-phosphate + phosphoenolpyruvate + H2O = 3-deoxy-alpha-D-manno-2-octulosonate-8-phosphate + phosphate. It functions in the pathway carbohydrate biosynthesis; 3-deoxy-D-manno-octulosonate biosynthesis; 3-deoxy-D-manno-octulosonate from D-ribulose 5-phosphate: step 2/3. Its pathway is bacterial outer membrane biogenesis; lipopolysaccharide biosynthesis. This Rickettsia bellii (strain OSU 85-389) protein is 2-dehydro-3-deoxyphosphooctonate aldolase.